Consider the following 385-residue polypeptide: Chaperone protein DnaJ (385 aa).

The region spanning 5 to 72 is the J domain; it reads DYYEVLGVGK…QKRAAYDQFG (68 aa). Positions 26-48 are disordered; that stretch reads RKLAMKHHPDRNQGDGAKASEEK. The segment covering 35-48 has biased composition (basic and acidic residues); that stretch reads DRNQGDGAKASEEK. The CR-type zinc-finger motif lies at 145 to 223; it reads GKESQIRIPT…CNGAGKVKKQ (79 aa). Positions 158, 161, 175, 178, 197, 200, 211, and 214 each coordinate Zn(2+). CXXCXGXG motif repeat units lie at residues 158–165, 175–182, 197–204, and 211–218; these read CDTCHGSG, CTTCHGAG, CPHCHGSG, and CTSCNGAG. Residues 362–385 form a disordered region; that stretch reads FRKGGDKHSPTSKSWTDRVKDLFK.

This sequence belongs to the DnaJ family. As to quaternary structure, homodimer. The cofactor is Zn(2+).

Its subcellular location is the cytoplasm. Functionally, participates actively in the response to hyperosmotic and heat shock by preventing the aggregation of stress-denatured proteins and by disaggregating proteins, also in an autonomous, DnaK-independent fashion. Unfolded proteins bind initially to DnaJ; upon interaction with the DnaJ-bound protein, DnaK hydrolyzes its bound ATP, resulting in the formation of a stable complex. GrpE releases ADP from DnaK; ATP binding to DnaK triggers the release of the substrate protein, thus completing the reaction cycle. Several rounds of ATP-dependent interactions between DnaJ, DnaK and GrpE are required for fully efficient folding. Also involved, together with DnaK and GrpE, in the DNA replication of plasmids through activation of initiation proteins. In Leptothrix cholodnii (strain ATCC 51168 / LMG 8142 / SP-6) (Leptothrix discophora (strain SP-6)), this protein is Chaperone protein DnaJ.